The chain runs to 291 residues: m-AAA protease-interacting protein 1, mitochondrial (291 aa).

The transit peptide at 1–96 (MALAARLLPL…SLPASPIRSY (96 aa)) directs the protein to the mitochondrion.

Interacts with AFG3L2. Interacts with SPG7. Interacts with SMDT1/EMRE (via the N-terminal transit peptide); interaction is direct and takes place before maturation of SMDT1/EMRE.

It is found in the mitochondrion matrix. Promotes sorting of SMDT1/EMRE in mitochondria by ensuring its maturation. Interacts with the transit peptide region of SMDT1/EMRE precursor protein in the mitochondrial matrix, leading to protect it against protein degradation by YME1L1, thereby ensuring SMDT1/EMRE maturation by the mitochondrial processing peptidase (PMPCA and PMPCB). This chain is m-AAA protease-interacting protein 1, mitochondrial, found in Rattus norvegicus (Rat).